A 272-amino-acid polypeptide reads, in one-letter code: Acidic leucine-rich nuclear phosphoprotein 32 family member B (272 aa).

LRR repeat units lie at residues 18–38 (AVRELVLDNCKAMDGKIEGLT), 43–64 (NLEFLSLISVGLFSVSDLPKLP), 65–87 (KLKKLELSENRIFGGLDRLAEEL), and 89–110 (SLTHLNLSGNNLKDISTLEPLK). The LRRCT domain occupies 123-161 (CEVTNRSDYRETVFRLLPQLSYLDGYDREDQEAPDSDVE). Residues 149 to 254 (DREDQEAPDS…DEDEDEEEEE (106 aa)) are compositionally biased toward acidic residues. Residues 149–272 (DREDQEAPDS…RETDDEGEDD (124 aa)) form a disordered region. Phosphoserine occurs at positions 164 and 171. The segment covering 255-265 (SGKGEKRKRET) has biased composition (basic and acidic residues). Residues 260–263 (KRKR) carry the Nuclear localization signal motif. Position 265 is a phosphothreonine (Thr-265).

The protein belongs to the ANP32 family. As to quaternary structure, interacts with histones H3 and H4. Interacts with KLF5; this interaction induces promoter region-specific histone incorporation and inhibition of histone acetylation by ANP32B. Post-translationally, some glutamate residues are glycylated by TTLL8. This modification occurs exclusively on glutamate residues and results in a glycine chain on the gamma-carboxyl group. Directly cleaved by caspase-3/CASP3.

It is found in the nucleus. Functionally, multifunctional protein that is involved in the regulation of many processes including cell proliferation, apoptosis, cell cycle progression or transcription. Regulates the proliferation of neuronal stem cells, differentiation of leukemic cells and progression from G1 to S phase of the cell cycle. As negative regulator of caspase-3-dependent apoptosis, may act as an antagonist of ANP32A in regulating tissue homeostasis. Exhibits histone chaperone properties, able to recruit histones to certain promoters, thus regulating the transcription of specific genes. Also plays an essential role in the nucleocytoplasmic transport of specific mRNAs via the uncommon nuclear mRNA export receptor XPO1/CRM1. Participates in the regulation of adequate adaptive immune responses by acting on mRNA expression and cell proliferation. The polypeptide is Acidic leucine-rich nuclear phosphoprotein 32 family member B (Anp32b) (Mus musculus (Mouse)).